Consider the following 385-residue polypeptide: Homoserine O-succinyltransferase (385 aa).

An AB hydrolase-1 domain is found at Asn51 to Leu360. Ser157 acts as the Nucleophile in catalysis. Residue Arg227 participates in substrate binding. Residues Asp323 and His356 contribute to the active site. Position 357 (Asp357) interacts with substrate.

The protein belongs to the AB hydrolase superfamily. MetX family. As to quaternary structure, homodimer.

It localises to the cytoplasm. The catalysed reaction is L-homoserine + succinyl-CoA = O-succinyl-L-homoserine + CoA. Its pathway is amino-acid biosynthesis; L-methionine biosynthesis via de novo pathway; O-succinyl-L-homoserine from L-homoserine: step 1/1. Transfers a succinyl group from succinyl-CoA to L-homoserine, forming succinyl-L-homoserine. In Hahella chejuensis (strain KCTC 2396), this protein is Homoserine O-succinyltransferase.